A 1588-amino-acid polypeptide reads, in one-letter code: Paternally-expressed gene 3 protein (1588 aa).

The 83-residue stretch at His46–Tyr128 folds into the SCAN box domain. Disordered stretches follow at residues Tyr128–Gln230, Asp266–Ile306, and Lys319–Asp349. Residues Gln129–Asp142 show a composition bias toward acidic residues. Basic and acidic residues-rich tracts occupy residues Asp143–Ser152, Ser161–Ser182, Phe206–Asp225, and Pro295–Ile306. 3 consecutive C2H2-type zinc fingers follow at residues Tyr454–His476, Phe507–His529, and Tyr565–His587. Residues Phe588–Thr607 are compositionally biased toward basic and acidic residues. The segment at Phe588 to Pro610 is disordered. The C2H2-type 4 zinc-finger motif lies at Tyr627–His649. Positions Leu838–Arg930 are disordered. Over residues Leu868–Pro881 the composition is skewed to basic and acidic residues. A C2H2-type 5 zinc finger spans residues Tyr969–His991. Positions Glu1056–Asp1104 are disordered. Residues Glu1071–Glu1082 are compositionally biased toward basic and acidic residues. C2H2-type zinc fingers lie at residues Tyr1107 to His1129, Tyr1163 to His1185, Ile1225 to His1247, Phe1282 to His1304, and Tyr1332 to His1354. A compositionally biased stretch (acidic residues) spans Ala1395–Ala1415. A disordered region spans residues Ala1395–Asp1495. A run of 7 repeats spans residues Pro1397–Glu1403, Pro1404–Glu1410, Pro1411–Glu1417, Pro1418–Ala1422, Pro1425–Ala1429, Pro1432–Ala1436, and Pro1439–Ala1443. The 3 X 7 AA repeat of P-E-V-E-A-A-E stretch occupies residues Pro1397–Glu1417. Residues Pro1418 to Ala1443 are 4 X 5 AA repeat of P-X-G-E-A. Composition is skewed to acidic residues over residues Asp1449 to Glu1466 and Pro1475 to Asp1495. C2H2-type zinc fingers lie at residues Tyr1505–His1527 and Phe1564–His1586.

The protein belongs to the krueppel C2H2-type zinc-finger protein family. Homodimer. Interacts with SIAH1A and SIAH2. Interacts with TRAF2.

Its subcellular location is the nucleus. The protein resides in the cytoplasm. In terms of biological role, induces apoptosis in cooperation with SIAH1A. Acts as a mediator between p53/TP53 and BAX in a neuronal death pathway that is activated by DNA damage. Acts synergistically with TRAF2 and inhibits TNF induced apoptosis through activation of NF-kappa-B. This Pan troglodytes (Chimpanzee) protein is Paternally-expressed gene 3 protein (PEG3).